The primary structure comprises 46 residues: Mu-hexatoxin-Mg2a (46 aa).

5 disulfide bridges follow: C3-C18, C10-C24, C17-C36, C21-C43, and C26-C34.

This sequence belongs to the neurotoxin 02 (plectoxin) family. 02 (plectoxin) subfamily. In terms of tissue distribution, expressed by the venom gland.

The protein resides in the secreted. Functionally, competes for binding at site 3 of the insect voltage-gated sodium channel (Nav). Insecticidal neurotoxin. Causes temporary paralysis to lepidopteran larvae (10.3 nmol/g) or to crickets (doses from 0.93 to 119 ug/g). Is not toxic to mice when injected intracranially (high doses). In Macrothele gigas (Japanese funnel web spider), this protein is Mu-hexatoxin-Mg2a.